The following is a 456-amino-acid chain: UDP-N-acetylmuramate--L-alanine ligase (456 aa).

ATP is bound at residue 112 to 118 (GTHGKTT).

This sequence belongs to the MurCDEF family.

It localises to the cytoplasm. It carries out the reaction UDP-N-acetyl-alpha-D-muramate + L-alanine + ATP = UDP-N-acetyl-alpha-D-muramoyl-L-alanine + ADP + phosphate + H(+). Its pathway is cell wall biogenesis; peptidoglycan biosynthesis. Functionally, cell wall formation. This Trichlorobacter lovleyi (strain ATCC BAA-1151 / DSM 17278 / SZ) (Geobacter lovleyi) protein is UDP-N-acetylmuramate--L-alanine ligase.